Here is a 554-residue protein sequence, read N- to C-terminus: Chaperonin GroEL (554 aa).

ATP-binding positions include 30 to 33, Lys-51, 87 to 91, Gly-415, 479 to 481, and Asp-495; these read TLGP, DGTTT, and NAA.

Belongs to the chaperonin (HSP60) family. In terms of assembly, forms a cylinder of 14 subunits composed of two heptameric rings stacked back-to-back. Interacts with the co-chaperonin GroES.

It is found in the cytoplasm. It carries out the reaction ATP + H2O + a folded polypeptide = ADP + phosphate + an unfolded polypeptide.. Together with its co-chaperonin GroES, plays an essential role in assisting protein folding. The GroEL-GroES system forms a nano-cage that allows encapsulation of the non-native substrate proteins and provides a physical environment optimized to promote and accelerate protein folding. The protein is Chaperonin GroEL of Nitrosococcus oceani (strain ATCC 19707 / BCRC 17464 / JCM 30415 / NCIMB 11848 / C-107).